Reading from the N-terminus, the 122-residue chain is Large ribosomal subunit protein uL14 (122 aa).

Belongs to the universal ribosomal protein uL14 family. Part of the 50S ribosomal subunit. Forms a cluster with proteins L3 and L19. In the 70S ribosome, L14 and L19 interact and together make contacts with the 16S rRNA in bridges B5 and B8.

Its function is as follows. Binds to 23S rRNA. Forms part of two intersubunit bridges in the 70S ribosome. The protein is Large ribosomal subunit protein uL14 of Shewanella baltica (strain OS223).